We begin with the raw amino-acid sequence, 243 residues long: Peptidase E (243 aa).

Active-site charge relay system residues include serine 118, aspartate 133, and histidine 155.

The protein belongs to the peptidase S51 family.

The protein resides in the cytoplasm. The catalysed reaction is Dipeptidase E catalyzes the hydrolysis of dipeptides Asp-|-Xaa. It does not act on peptides with N-terminal Glu, Asn or Gln, nor does it cleave isoaspartyl peptides.. Its function is as follows. Hydrolyzes dipeptides containing N-terminal aspartate residues. May play a role in allowing the cell to use peptide aspartate to spare carbon otherwise required for the synthesis of the aspartate family of amino acids. The sequence is that of Peptidase E from Streptomyces coelicolor (strain ATCC BAA-471 / A3(2) / M145).